A 664-amino-acid chain; its full sequence is Cyclic nucleotide-gated channel alpha-2 (664 aa).

Residues 1–10 are compositionally biased toward polar residues; that stretch reads MMTEKSNGVK. The segment at 1 to 51 is disordered; sequence MMTEKSNGVKSSPANNHNHHPPPSIKANGKDDHRAGSRPQSVAADDDTSPE. The Cytoplasmic segment spans residues 1–146; sequence MMTEKSNGVK…PAGDWYYRWL (146 aa). Residues 147-168 traverse the membrane as a helical segment; the sequence is FVIAMPVLYNWCLLVARACFSD. The Extracellular portion of the chain corresponds to 169–178; it reads LQRNYFVVWL. A helical transmembrane segment spans residues 179–199; it reads VLDYFSDTVYIADLIIRLRTG. Residues 200-224 lie on the Cytoplasmic side of the membrane; sequence FLEQGLLVKDPKKLRDNYIHTLQFK. Residues 225–243 traverse the membrane as a helical segment; sequence LDVASIIPTDLIYFAVGIH. Over 244 to 248 the chain is Extracellular; sequence SPEVR. Residues 249–267 traverse the membrane as a helical segment; sequence FNRLLHFARMFEFFDRTET. The Cytoplasmic segment spans residues 268-274; the sequence is RTSYPNI. Residues 272-380 form an ion conduction pathway region; it reads PNIFRISNLV…GNVGSMISNM (109 aa). A helical transmembrane segment spans residues 275–298; that stretch reads FRISNLVLYILVIIHWNACIYYVI. Over 299–321 the chain is Extracellular; the sequence is SKSIGFGVDTWVYPNITDPEYGY. 2 consecutive transmembrane segments (helical) span residues 322 to 356 and 357 to 381; these read LAREYIYCLYWSTLTLTTIGETPPPVKDEEYLFVI and FDFLIGVLIFATIVGNVGSMISNMN. Positions 339–342 are selectivity filter; the sequence is TIGE. The C-linker stretch occupies residues 382 to 458; it reads ATRAEFQAKI…STLKKVRIFQ (77 aa). Residues 382–664 lie on the Cytoplasmic side of the membrane; that stretch reads ATRAEFQAKI…INTPEPTAAE (283 aa). Positions 462–582 are cyclic nucleotide-binding domain; that stretch reads AGLLVELVLK…EERGREILMK (121 aa). 4 residues coordinate 3',5'-cyclic GMP: Gly522, Ser525, Arg538, and Thr539. 3',5'-cyclic AMP-binding residues include Arg538 and Thr539. Residues 599 to 653 are a coiled coil; that stretch reads VQEKLEQLETNMDTLYTRFARLLAEYTGAQQKLKQRITVLETKMKQNHEDDYLSD.

The protein belongs to the cyclic nucleotide-gated cation channel (TC 1.A.1.5) family. CNGA2 subfamily. As to quaternary structure, the olfactory cyclic nucleotide-gated channel is an heterotetramer composed of CNGA2, CNGA4 and CNGB1b subunits with 2:1:1 stoichiometry. As to expression, olfactory neurons. Widely expressed in brain, enriched in deep cerebellar nuclei, olfactory bulb mitral cells and cerebellar Purkinje neurons. Expressed in olfactory sensory cilia (at protein level).

Its subcellular location is the cell projection. The protein localises to the cilium membrane. It carries out the reaction Ca(2+)(in) = Ca(2+)(out). The enzyme catalyses Na(+)(in) = Na(+)(out). The catalysed reaction is K(+)(in) = K(+)(out). It catalyses the reaction NH4(+)(in) = NH4(+)(out). It carries out the reaction Rb(+)(in) = Rb(+)(out). The enzyme catalyses Li(+)(in) = Li(+)(out). The catalysed reaction is Cs(+)(in) = Cs(+)(out). Its activity is regulated as follows. The channel activity is inhibited by L-cis diltiazem. In terms of biological role, pore-forming subunit of the olfactory cyclic nucleotide-gated channel. Operates in the cilia of olfactory sensory neurons where chemical stimulation of the odorant is converted to an electrical signal. Mediates odorant-induced cAMP-dependent Ca(2+) influx triggering neuron depolarization. The rise of intracellular Ca(2+) levels potentiates the olfactory response by activating Ca(2+)-dependent Cl(-) channels, but it also serves as a negative feedback signal to desensitize the channel for rapid adaptation to odorants. Conducts cAMP- and cGMP-gated ion currents, with permeability for monovalent and divalent cations. This is Cyclic nucleotide-gated channel alpha-2 from Rattus norvegicus (Rat).